The sequence spans 481 residues: Adenosylhomocysteinase (481 aa).

Substrate-binding residues include Thr-65, Asp-140, and Glu-200. 201–203 (TTT) serves as a coordination point for NAD(+). Residues Lys-230 and Asp-234 each contribute to the substrate site. NAD(+)-binding positions include Asn-235, 264–269 (GYGDVG), Glu-287, Asn-322, 343–345 (IGH), and Asn-393.

Belongs to the adenosylhomocysteinase family. NAD(+) serves as cofactor.

Its subcellular location is the cytoplasm. It carries out the reaction S-adenosyl-L-homocysteine + H2O = L-homocysteine + adenosine. The protein operates within amino-acid biosynthesis; L-homocysteine biosynthesis; L-homocysteine from S-adenosyl-L-homocysteine: step 1/1. Functionally, may play a key role in the regulation of the intracellular concentration of adenosylhomocysteine. This chain is Adenosylhomocysteinase, found in Polynucleobacter necessarius subsp. necessarius (strain STIR1).